The following is a 219-amino-acid chain: 2-hydroxy-3-keto-5-methylthiopentenyl-1-phosphate phosphatase (219 aa).

It belongs to the HAD-like hydrolase superfamily. MtnX family.

The enzyme catalyses 2-hydroxy-5-methylsulfanyl-3-oxopent-1-enyl phosphate + H2O = 1,2-dihydroxy-5-(methylsulfanyl)pent-1-en-3-one + phosphate. It participates in amino-acid biosynthesis; L-methionine biosynthesis via salvage pathway; L-methionine from S-methyl-5-thio-alpha-D-ribose 1-phosphate: step 4/6. In terms of biological role, dephosphorylates 2-hydroxy-3-keto-5-methylthiopentenyl-1-phosphate (HK-MTPenyl-1-P) yielding 1,2-dihydroxy-3-keto-5-methylthiopentene (DHK-MTPene). This Bacillus cereus (strain ATCC 14579 / DSM 31 / CCUG 7414 / JCM 2152 / NBRC 15305 / NCIMB 9373 / NCTC 2599 / NRRL B-3711) protein is 2-hydroxy-3-keto-5-methylthiopentenyl-1-phosphate phosphatase.